Here is a 196-residue protein sequence, read N- to C-terminus: MPVGVPKVPFRAPGDEDATWVDLYNRLYRERLLFLAQDINHEIANQLMGLMVYLSAEDSNKDIFSFINCPGGSVIPGVGLFDMMQAIVPDVHTICMGVAASMGSFILIGGEMPKRIALPHARIMIHQPASSYYDGSAADFHNESKHVTMLRDYITRCYIERTDQPGEVIQRDLNRDVFMSATEAQAYGIVDVVAEG.

S101 functions as the Nucleophile in the catalytic mechanism. H126 is a catalytic residue.

This sequence belongs to the peptidase S14 family. Component of the chloroplastic Clp protease core complex.

It is found in the plastid. The protein localises to the chloroplast stroma. It catalyses the reaction Hydrolysis of proteins to small peptides in the presence of ATP and magnesium. alpha-casein is the usual test substrate. In the absence of ATP, only oligopeptides shorter than five residues are hydrolyzed (such as succinyl-Leu-Tyr-|-NHMec, and Leu-Tyr-Leu-|-Tyr-Trp, in which cleavage of the -Tyr-|-Leu- and -Tyr-|-Trp bonds also occurs).. Cleaves peptides in various proteins in a process that requires ATP hydrolysis. Has a chymotrypsin-like activity. Plays a major role in the degradation of misfolded proteins. The chain is ATP-dependent Clp protease proteolytic subunit from Pinus thunbergii (Japanese black pine).